Here is a 165-residue protein sequence, read N- to C-terminus: MALNLQDKQAIVAEVNEVAKGALSAVVADSRGVTVDKMTELRKAGREAGVYMRVVRNTLMRRVVEGTPFECLKDTFVGPTLIAFSHEHPGAAARLFKDFAKANAKFEIKAAAFEGEMIPAAQIDRLATLPTYDEAIARLMATMKEAAAGKLVRTLAALRDQKEAA.

This sequence belongs to the universal ribosomal protein uL10 family. Part of the ribosomal stalk of the 50S ribosomal subunit. The N-terminus interacts with L11 and the large rRNA to form the base of the stalk. The C-terminus forms an elongated spine to which L12 dimers bind in a sequential fashion forming a multimeric L10(L12)X complex.

Functionally, forms part of the ribosomal stalk, playing a central role in the interaction of the ribosome with GTP-bound translation factors. This is Large ribosomal subunit protein uL10 from Serratia proteamaculans (strain 568).